The sequence spans 358 residues: MKITLLYGGRSAEHDVSVLSAFSVLNAIYYTYYQVQLIFISKEGQWVKGPLLTEKPTSKEDLHLTWDPSGKVTDGFTGRVINPGEIKEEGTIVFPVLHGPNGEDGTIQGFLETLNLPYVGAGVLTSACAMDKIMTKYILQAAGVPQVPYVPVLKNQWKENPKKIFDQCEGSLLYPMFVKPANMGSSVGISKAENREELQNALALAYQYDSRAIVEQGIEAREIEVAVLGNEDVRTTLPGEVVKDVAFYDYDAKYINNKIEMQIPAEVPEEVYQKAQEYAKIAYTMLGGSGLSRCDFFLTNKNELFLNELNTMPGFTQFSMYPLLWENMGLKYGDLIEELIQLGINRFNQRQGFFEANE.

In terms of domain architecture, ATP-grasp spans 136 to 341 (KYILQAAGVP…YGDLIEELIQ (206 aa)). ATP is bound at residue 169–224 (EGSLLYPMFVKPANMGSSVGISKAENREELQNALALAYQYDSRAIVEQGIEAREIE). Residues D295, E308, and N310 each coordinate Mg(2+).

This sequence belongs to the D-alanine--D-alanine ligase family. Mg(2+) is required as a cofactor. The cofactor is Mn(2+).

The protein localises to the cytoplasm. It catalyses the reaction 2 D-alanine + ATP = D-alanyl-D-alanine + ADP + phosphate + H(+). The protein operates within cell wall biogenesis; peptidoglycan biosynthesis. Cell wall formation. The sequence is that of D-alanine--D-alanine ligase from Enterococcus hirae (strain ATCC 9790 / DSM 20160 / JCM 8729 / LMG 6399 / NBRC 3181 / NCIMB 6459 / NCDO 1258 / NCTC 12367 / WDCM 00089 / R).